Reading from the N-terminus, the 499-residue chain is Tektin-like protein 1 (499 aa).

Coiled coils occupy residues 197-227 (SMLTWEKEELKSMKRKMERDMEKSEVLLKTL) and 297-317 (LNEAKRLLVESKDTLVEMAKN). Tyr-372 carries the post-translational modification Phosphotyrosine.

As to quaternary structure, microtubule inner protein component of sperm flagellar doublet microtubules.

The protein resides in the cytoplasm. It is found in the cytoskeleton. Its subcellular location is the flagellum axoneme. Functionally, microtubule inner protein (MIP) part of the dynein-decorated doublet microtubules (DMTs) in sperm flagellar axoneme, which is required for motile flagellum beating. Forms an extensive interaction network cross-linking the lumen of axonemal doublet microtubules. This chain is Tektin-like protein 1, found in Homo sapiens (Human).